The chain runs to 131 residues: D-ribose pyranase (131 aa).

The Proton donor role is filled by His-20. Substrate-binding positions include Asp-28, His-98, and 120-122; that span reads YAN.

This sequence belongs to the RbsD / FucU family. RbsD subfamily. Homodecamer.

The protein resides in the cytoplasm. The catalysed reaction is beta-D-ribopyranose = beta-D-ribofuranose. It functions in the pathway carbohydrate metabolism; D-ribose degradation; D-ribose 5-phosphate from beta-D-ribopyranose: step 1/2. Its function is as follows. Catalyzes the interconversion of beta-pyran and beta-furan forms of D-ribose. The chain is D-ribose pyranase from Bacillus velezensis (strain DSM 23117 / BGSC 10A6 / LMG 26770 / FZB42) (Bacillus amyloliquefaciens subsp. plantarum).